We begin with the raw amino-acid sequence, 192 residues long: Late embryogenesis abundant protein 47 (192 aa).

The Nuclear localization signal (NLS) motif lies at 5–9; the sequence is QLQKP. SMP domains lie at 68 to 125 and 133 to 190; these read ITIG…LNAR and TTLA…RINQ. The tract at residues 146–174 is disordered; the sequence is LPSDKAATRKDAEGVTGAEMRNDPHLTTY. Residues 147–158 are compositionally biased toward basic and acidic residues; that stretch reads PSDKAATRKDAE.

Belongs to the LEA type SMP family.

It is found in the cytoplasm. The protein resides in the nucleus. Functionally, LEA proteins are late embryonic proteins abundant in higher plant seed embryos. The function of those proteins is not known. The chain is Late embryogenesis abundant protein 47 from Arabidopsis thaliana (Mouse-ear cress).